The primary structure comprises 202 residues: Large ribosomal subunit protein bL25 (202 aa).

The interval 180 to 202 (PKQEAFEEDAEPSPGEEPEGENQ) is disordered. Over residues 185–202 (FEEDAEPSPGEEPEGENQ) the composition is skewed to acidic residues.

This sequence belongs to the bacterial ribosomal protein bL25 family. CTC subfamily. In terms of assembly, part of the 50S ribosomal subunit; part of the 5S rRNA/L5/L18/L25 subcomplex. Contacts the 5S rRNA. Binds to the 5S rRNA independently of L5 and L18.

Its function is as follows. This is one of the proteins that binds to the 5S RNA in the ribosome where it forms part of the central protuberance. The sequence is that of Large ribosomal subunit protein bL25 from Bacillus velezensis (strain DSM 23117 / BGSC 10A6 / LMG 26770 / FZB42) (Bacillus amyloliquefaciens subsp. plantarum).